A 644-amino-acid chain; its full sequence is Adhesion G-protein coupled receptor F2 (644 aa).

A signal peptide spans 1 to 18 (MIPAHWLYCLMLLLPIES). The Extracellular portion of the chain corresponds to 19 to 386 (CRILCQASSK…ESPVLTYITY (368 aa)). N-linked (GlcNAc...) asparagine glycans are attached at residues asparagine 155, asparagine 219, asparagine 293, and asparagine 311. The GAIN-B domain occupies 233-377 (SRGSLGKNFT…SILMSPNTLE (145 aa)). Intrachain disulfides connect cysteine 329/cysteine 356 and cysteine 344/cysteine 358. A GPS region spans residues 329–377 (CVGWHSLESRWDWRACKTIQENSRQAVCRCRPNKLYTSFSILMSPNTLE). The helical transmembrane segment at 387–407 (IGLGISICSLIICLAIEVLVW) threads the bilayer. Over 408–422 (SQVTKTEISYLRHLC) the chain is Cytoplasmic. Residues 423–443 (IANIAATLLMADAWFIVASFL) form a helical membrane-spanning segment. Residues 444–465 (SGPVLHHNGCVAATFFVHFFYL) lie on the Extracellular side of the membrane. A helical membrane pass occupies residues 466–486 (SVFFWMLAKALLILYGILIVF). Residues 487–493 (HTLPKSC) lie on the Cytoplasmic side of the membrane. Residues 494–514 (LVASLFSVGYGCPLVIAIITL) traverse the membrane as a helical segment. Residues 515-541 (AVTEPGKGYLRPEACWLNWDMTKALLA) are Extracellular-facing. The chain crosses the membrane as a helical span at residues 542 to 562 (FVVPALAIVVVNLITVTMVII). The Cytoplasmic portion of the chain corresponds to 563-585 (KTQRAAIGSSMFQEVRAIVRICK). A helical membrane pass occupies residues 586–606 (NIAILTPLLGLTWGFGIATVI). Over 607–610 (NGHS) the chain is Extracellular. A helical membrane pass occupies residues 611–631 (LAFHIIFSLLNALQVSPDAAV).

Belongs to the G-protein coupled receptor 2 family. Adhesion G-protein coupled receptor (ADGR) subfamily. Mainly expressed in skin and heart, and very weakly in lung and spleen. Detected in all epidermal layers of skin.

The protein resides in the membrane. Functionally, orphan receptor. In Mus musculus (Mouse), this protein is Adhesion G-protein coupled receptor F2 (Adgrf2).